A 367-amino-acid polypeptide reads, in one-letter code: Glutamate 5-kinase (367 aa).

Lys-10 serves as a coordination point for ATP. Substrate-binding residues include Ser-50, Asp-137, and Asn-149. Residues 169–170 (TD) and 211–217 (TGGMSTK) contribute to the ATP site. One can recognise a PUA domain in the interval 275-353 (AGEITVDEGA…QQIDAILGYE (79 aa)).

This sequence belongs to the glutamate 5-kinase family.

The protein resides in the cytoplasm. The catalysed reaction is L-glutamate + ATP = L-glutamyl 5-phosphate + ADP. It functions in the pathway amino-acid biosynthesis; L-proline biosynthesis; L-glutamate 5-semialdehyde from L-glutamate: step 1/2. Functionally, catalyzes the transfer of a phosphate group to glutamate to form L-glutamate 5-phosphate. The protein is Glutamate 5-kinase of Salmonella paratyphi A (strain ATCC 9150 / SARB42).